We begin with the raw amino-acid sequence, 74 residues long: MSRRVILTLVLVTILVKTMAGMESKKVETTDEIKKRSGTSEKERESGRLLGVVKRLIVCFRSPFPGRRAISEQT.

Residues 1–21 (MSRRVILTLVLVTILVKTMAG) form the signal peptide. The propeptide occupies 22-33 (MESKKVETTDEI). Position 65 is a proline amide (Pro-65). A propeptide spanning residues 69 to 74 (AISEQT) is cleaved from the precursor.

Belongs to the non-disulfide-bridged peptide (NDBP) superfamily. Medium-length antimicrobial peptide (group 3) family. In terms of tissue distribution, expressed by the venom gland.

The protein resides in the secreted. The protein localises to the target cell membrane. Possesses antimicrobial activity against both Gram-negative (MIC=23.8-51.2 uM) and Gram-positive (MIC=11.8-46.5 uM) bacteria, as well as against the fungus C.tropicalis (MIC=48.6 uM). Also possesses a relatively high hemolytic activity. May act by disrupting the integrity of the bacterial cell membrane. The sequence is that of Antimicrobial peptide HsAp1 from Heterometrus spinifer (Asia giant forest scorpion).